The chain runs to 296 residues: Nucleotide-binding protein SGO_0954 (296 aa).

Residue 13–20 participates in ATP binding; it reads GMSGAGKT. Residue 63–66 participates in GTP binding; it reads DMRS.

The protein belongs to the RapZ-like family.

Displays ATPase and GTPase activities. In Streptococcus gordonii (strain Challis / ATCC 35105 / BCRC 15272 / CH1 / DL1 / V288), this protein is Nucleotide-binding protein SGO_0954.